Consider the following 1064-residue polypeptide: WD repeat-containing protein on Y chromosome (1064 aa).

WD repeat units lie at residues 150–194 (EEVT…IRTA), 317–356 (RIPL…EPSA), 360–399 (GHNG…LLQT), 450–489 (THAA…RKII), 502–541 (IIDI…VVRN), 589–629 (FHTD…RRYS), 742–781 (KTGD…VPAS), and 825–864 (GHLK…LGTL). Residues 1022–1044 (SSLNIKQPTRRRSGKTHDPRNIR) are disordered.

In Drosophila ananassae (Fruit fly), this protein is WD repeat-containing protein on Y chromosome.